We begin with the raw amino-acid sequence, 357 residues long: tRNA-specific 2-thiouridylase MnmA (357 aa).

ATP is bound by residues 11 to 18 and leucine 37; that span reads AMSGGVDS. Cysteine 102 (nucleophile) is an active-site residue. Cysteine 102 and cysteine 197 are joined by a disulfide. Residue glycine 126 participates in ATP binding. The tract at residues 148-150 is interaction with tRNA; the sequence is KDQ. Cysteine 197 (cysteine persulfide intermediate) is an active-site residue. Positions 301–302 are interaction with tRNA; that stretch reads RY.

This sequence belongs to the MnmA/TRMU family.

The protein resides in the cytoplasm. It carries out the reaction S-sulfanyl-L-cysteinyl-[protein] + uridine(34) in tRNA + AH2 + ATP = 2-thiouridine(34) in tRNA + L-cysteinyl-[protein] + A + AMP + diphosphate + H(+). Catalyzes the 2-thiolation of uridine at the wobble position (U34) of tRNA, leading to the formation of s(2)U34. The protein is tRNA-specific 2-thiouridylase MnmA of Dehalococcoides mccartyi (strain ATCC BAA-2266 / KCTC 15142 / 195) (Dehalococcoides ethenogenes (strain 195)).